Reading from the N-terminus, the 268-residue chain is Tryptophan synthase alpha chain (268 aa).

Active-site proton acceptor residues include Glu-49 and Asp-60.

It belongs to the TrpA family. Tetramer of two alpha and two beta chains.

It carries out the reaction (1S,2R)-1-C-(indol-3-yl)glycerol 3-phosphate + L-serine = D-glyceraldehyde 3-phosphate + L-tryptophan + H2O. The protein operates within amino-acid biosynthesis; L-tryptophan biosynthesis; L-tryptophan from chorismate: step 5/5. Functionally, the alpha subunit is responsible for the aldol cleavage of indoleglycerol phosphate to indole and glyceraldehyde 3-phosphate. This is Tryptophan synthase alpha chain from Xanthomonas euvesicatoria pv. vesicatoria (strain 85-10) (Xanthomonas campestris pv. vesicatoria).